The sequence spans 471 residues: Collagen alpha-3(IV) chain (471 aa).

Residues 1–238 (GLPGRKGPVG…KGKPGDTGPP (238 aa)) are triple-helical region. The tract at residues 1-241 (GLPGRKGPVG…PGDTGPPAAG (241 aa)) is disordered. Over residues 52-61 (MPGPPGPPGS) the composition is skewed to pro residues. The short motif at 106-108 (RGD) is the Cell attachment site element. The segment covering 127–141 (PGPPGPPGQSGPKGP) has biased composition (pro residues). Over residues 165-174 (SAGEPGMQGE) the composition is skewed to low complexity. A compositionally biased stretch (pro residues) spans 175–187 (PGPPGPPGDPGPC). 2 positions are modified to hydroxyproline: proline 232 and proline 238. One can recognise a Collagen IV NC1 domain in the interval 246–470 (GFVFTRHSQT…SRCQVCMKMR (225 aa)). Disulfide bonds link cysteine 261–cysteine 352, cysteine 294–cysteine 349, cysteine 306–cysteine 312, cysteine 371–cysteine 466, cysteine 405–cysteine 463, and cysteine 417–cysteine 423. Residue methionine 334 forms an S-Lysyl-methionine sulfilimine (Met-Lys) (interchain with K-452) linkage. Residue lysine 452 forms an S-Lysyl-methionine sulfilimine (Lys-Met) (interchain with M-334) linkage.

Belongs to the type IV collagen family. There are six type IV collagen isoforms, alpha 1(IV)-alpha 6(IV), each of which can form a triple helix structure with 2 other chains to generate type IV collagen network. The alpha 3(IV) chain forms a triple helical protomer with alpha 4(IV) and alpha 5(IV); this triple helical structure dimerizes through NC1-NC1 domain interactions such that the alpha 3(IV), alpha 4(IV) and alpha 5(IV) chains of one protomer connect with the alpha 5(IV), alpha 4(IV) and alpha 3(IV) chains of the opposite promoter, respectively. Interacts with ITGB3. Associates with LAMB2 at the neuromuscular junction and in GBM. Prolines at the third position of the tripeptide repeating unit (G-X-Y) are hydroxylated in some or all of the chains. In terms of processing, type IV collagens contain numerous cysteine residues which are involved in inter- and intramolecular disulfide bonding. 12 of these, located in the NC1 domain, are conserved in all known type IV collagens. Post-translationally, the trimeric structure of the NC1 domains is stabilized by covalent bonds between Lys and Met residues. Phosphorylated. Thought to be phosphorylated by CERT, but CERT does not have kinase activity.

The protein localises to the secreted. Its subcellular location is the extracellular space. The protein resides in the extracellular matrix. It is found in the basement membrane. In terms of biological role, type IV collagen is the major structural component of glomerular basement membranes (GBM), forming a 'chicken-wire' meshwork together with laminins, proteoglycans and entactin/nidogen. The protein is Collagen alpha-3(IV) chain (COL4A3) of Bos taurus (Bovine).